We begin with the raw amino-acid sequence, 424 residues long: Hemagglutinin-esterase (424 aa).

The signal sequence occupies residues 1–16 (MFLLPRFVLVSCIIGS). The esterase domain 1 stretch occupies residues 7–127 (FVLVSCIIGS…SNDIWMQNKG (121 aa)). Over 17-392 (LGFDNPPTNV…PICVYDPLPI (376 aa)) the chain is Virion surface. The active-site Nucleophile is Ser40. Cys44 and Cys65 are oxidised to a cystine. N-linked (GlcNAc...) asparagine; by host glycosylation is found at Asn54, Asn89, Asn153, Asn236, and Asn301. 3 disulfides stabilise this stretch: Cys113–Cys162, Cys197–Cys276, and Cys205–Cys249. The tract at residues 128 to 266 (LFYTQVYKNM…GNYLAISNEL (139 aa)) is receptor binding. The esterase domain 2 stretch occupies residues 267 to 379 (LLTVPTKAIC…RCPTAADINT (113 aa)). Cysteines 307 and 312 form a disulfide. Asn316 carries N-linked (GlcNAc...) asparagine; by host glycosylation. Residues Asp326 and His329 each act as charge relay system in the active site. Cys347 and Cys371 are oxidised to a cystine. Asn358 is a glycosylation site (N-linked (GlcNAc...) asparagine; by host). Residues 393 to 413 (ILLGILLGVAVIIIVVLLLYF) form a helical membrane-spanning segment. The Intravirion portion of the chain corresponds to 414 to 424 (MVDNGTRLHDA). Asn417 is a glycosylation site (N-linked (GlcNAc...) asparagine; by host).

The protein belongs to the influenza type C/coronaviruses hemagglutinin-esterase family. As to quaternary structure, homodimer; disulfide-linked. Forms a complex with the M protein in the pre-Golgi. Associates then with S-M complex to form a ternary complex S-M-HE. N-glycosylated in the RER. In terms of processing, N-glycosylated in the host RER.

The protein resides in the virion membrane. Its subcellular location is the host cell membrane. The enzyme catalyses N-acetyl-9-O-acetylneuraminate + H2O = N-acetylneuraminate + acetate + H(+). It carries out the reaction N-acetyl-4-O-acetylneuraminate + H2O = N-acetylneuraminate + acetate + H(+). Structural protein that makes short spikes at the surface of the virus. Contains receptor binding and receptor-destroying activities. Mediates de-O-acetylation of N-acetyl-4-O-acetylneuraminic acid, which is probably the receptor determinant recognized by the virus on the surface of erythrocytes and susceptible cells. This receptor-destroying activity is important for virus release as it probably helps preventing self-aggregation and ensures the efficient spread of the progeny virus from cell to cell. May serve as a secondary viral attachment protein for initiating infection, the spike protein being the major one. May become a target for both the humoral and the cellular branches of the immune system. This is Hemagglutinin-esterase from Bovine coronavirus (strain 98TXSF-110-ENT) (BCoV-ENT).